Consider the following 480-residue polypeptide: Protein nucleotidyltransferase YdiU (480 aa).

ATP is bound by residues G87, G89, R90, K110, D122, G123, R173, and R180. D245 functions as the Proton acceptor in the catalytic mechanism. 2 residues coordinate Mg(2+): N246 and D255. D255 serves as a coordination point for ATP.

This sequence belongs to the SELO family. Requires Mg(2+) as cofactor. Mn(2+) is required as a cofactor.

It catalyses the reaction L-seryl-[protein] + ATP = 3-O-(5'-adenylyl)-L-seryl-[protein] + diphosphate. It carries out the reaction L-threonyl-[protein] + ATP = 3-O-(5'-adenylyl)-L-threonyl-[protein] + diphosphate. The enzyme catalyses L-tyrosyl-[protein] + ATP = O-(5'-adenylyl)-L-tyrosyl-[protein] + diphosphate. The catalysed reaction is L-histidyl-[protein] + UTP = N(tele)-(5'-uridylyl)-L-histidyl-[protein] + diphosphate. It catalyses the reaction L-seryl-[protein] + UTP = O-(5'-uridylyl)-L-seryl-[protein] + diphosphate. It carries out the reaction L-tyrosyl-[protein] + UTP = O-(5'-uridylyl)-L-tyrosyl-[protein] + diphosphate. Its function is as follows. Nucleotidyltransferase involved in the post-translational modification of proteins. It can catalyze the addition of adenosine monophosphate (AMP) or uridine monophosphate (UMP) to a protein, resulting in modifications known as AMPylation and UMPylation. The chain is Protein nucleotidyltransferase YdiU from Jannaschia sp. (strain CCS1).